Consider the following 369-residue polypeptide: Probable dual-specificity RNA methyltransferase RlmN (369 aa).

Residue glutamate 108 is the Proton acceptor of the active site. One can recognise a Radical SAM core domain in the interval 114-351 (YPDRATLCIS…LAQGVSCTVR (238 aa)). A disulfide bridge connects residues cysteine 121 and cysteine 362. Positions 128, 132, and 135 each coordinate [4Fe-4S] cluster. S-adenosyl-L-methionine-binding positions include 183–184 (GE), serine 217, 240–242 (SLH), and asparagine 319. Cysteine 362 acts as the S-methylcysteine intermediate in catalysis.

This sequence belongs to the radical SAM superfamily. RlmN family. [4Fe-4S] cluster serves as cofactor.

The protein resides in the cytoplasm. The enzyme catalyses adenosine(2503) in 23S rRNA + 2 reduced [2Fe-2S]-[ferredoxin] + 2 S-adenosyl-L-methionine = 2-methyladenosine(2503) in 23S rRNA + 5'-deoxyadenosine + L-methionine + 2 oxidized [2Fe-2S]-[ferredoxin] + S-adenosyl-L-homocysteine. It carries out the reaction adenosine(37) in tRNA + 2 reduced [2Fe-2S]-[ferredoxin] + 2 S-adenosyl-L-methionine = 2-methyladenosine(37) in tRNA + 5'-deoxyadenosine + L-methionine + 2 oxidized [2Fe-2S]-[ferredoxin] + S-adenosyl-L-homocysteine. Functionally, specifically methylates position 2 of adenine 2503 in 23S rRNA and position 2 of adenine 37 in tRNAs. The sequence is that of Probable dual-specificity RNA methyltransferase RlmN from Rhodococcus jostii (strain RHA1).